We begin with the raw amino-acid sequence, 171 residues long: 3-hydroxydecanoyl-[acyl-carrier-protein] dehydratase (171 aa).

His70 is an active-site residue.

The protein belongs to the thioester dehydratase family. FabA subfamily. In terms of assembly, homodimer.

It is found in the cytoplasm. It catalyses the reaction a (3R)-hydroxyacyl-[ACP] = a (2E)-enoyl-[ACP] + H2O. The catalysed reaction is (3R)-hydroxydecanoyl-[ACP] = (2E)-decenoyl-[ACP] + H2O. The enzyme catalyses (2E)-decenoyl-[ACP] = (3Z)-decenoyl-[ACP]. The protein operates within lipid metabolism; fatty acid biosynthesis. Functionally, necessary for the introduction of cis unsaturation into fatty acids. Catalyzes the dehydration of (3R)-3-hydroxydecanoyl-ACP to E-(2)-decenoyl-ACP and then its isomerization to Z-(3)-decenoyl-ACP. Can catalyze the dehydratase reaction for beta-hydroxyacyl-ACPs with saturated chain lengths up to 16:0, being most active on intermediate chain length. The protein is 3-hydroxydecanoyl-[acyl-carrier-protein] dehydratase of Pseudomonas syringae pv. tomato (strain ATCC BAA-871 / DC3000).